The primary structure comprises 674 residues: Cysteine-rich receptor-like protein kinase 6 (674 aa).

Residues 1 to 24 form the signal peptide; sequence MSSLISFNFLFLFSFLTSSFTASA. The Extracellular segment spans residues 25-289; sequence QDPFYLNHYC…LPGKSGNSTV (265 aa). Gnk2-homologous domains are found at residues 28 to 132 and 139 to 245; these read FYLN…HKNI and NEGE…LYPF. N-linked (GlcNAc...) asparagine glycans are attached at residues Asn-36, Asn-43, Asn-61, Asn-70, Asn-104, Asn-178, and Asn-247. The span at 254-266 shows a compositional bias: pro residues; that stretch reads PPLPPPPPPPPPR. The interval 254–284 is disordered; it reads PPLPPPPPPPPPRESLVSTPPISSSSLPGKS. Residues 268–284 show a composition bias toward low complexity; it reads SLVSTPPISSSSLPGKS. The N-linked (GlcNAc...) asparagine glycan is linked to Asn-286. Residues 290-310 form a helical membrane-spanning segment; that stretch reads LVVAVVVLAVLLFIALVGYCF. At 311–674 the chain is on the cytoplasmic side; sequence LAKKKKKTFD…DESITDLYPR (364 aa). The Protein kinase domain maps to 351–637; sequence FAESNKIGRG…TLPVPRQPGF (287 aa). ATP-binding positions include 357–365 and Lys-379; that span reads IGRGGFGEV. Tyr-424 carries the phosphotyrosine modification. The active-site Proton acceptor is the Asp-476. A Phosphoserine modification is found at Ser-480. Thr-516 bears the Phosphothreonine mark. Tyr-524 carries the phosphotyrosine modification. The segment at 648-674 is disordered; it reads LDSDQSTTTKSFPASIDDESITDLYPR. Residues 650–659 show a composition bias toward polar residues; the sequence is SDQSTTTKSF.

Belongs to the protein kinase superfamily. Ser/Thr protein kinase family. CRK subfamily.

The protein localises to the membrane. The enzyme catalyses L-seryl-[protein] + ATP = O-phospho-L-seryl-[protein] + ADP + H(+). The catalysed reaction is L-threonyl-[protein] + ATP = O-phospho-L-threonyl-[protein] + ADP + H(+). This chain is Cysteine-rich receptor-like protein kinase 6 (CRK6), found in Arabidopsis thaliana (Mouse-ear cress).